The primary structure comprises 256 residues: MAVGKNKRLSKGKKGLKKKTLDPFTRKDWYQIKAPSSFQIRDVGKTLVNRTTGLKNANDSLKGRIVEVSLADLQKDEDHAFRKVKLRVDEVQGKNCLTNFHGLDFTSDKLRSLVRKWQSLIEANITVKTTDDYLLRLFAIAFTKRRPNQIKKTTYAASSQIRAIRKKMTEIIQREASTCTLTQLTAKLIPEVIGREIEKATQGIYPLQNVHIRKVKLLKAPKFDLGALLNLHGESNTDEQGQKVEREFKEKVLEEV.

Alanine 2 carries the N-acetylalanine; partial modification.

The protein belongs to the eukaryotic ribosomal protein eS1 family. In terms of assembly, component of the small ribosomal subunit. Mature ribosomes consist of a small (40S) and a large (60S) subunit. The 40S subunit contains about 33 different proteins and 1 molecule of RNA (18S). The 60S subunit contains about 49 different proteins and 3 molecules of RNA (25S, 5.8S and 5S).

It is found in the cytoplasm. This Botryotinia fuckeliana (strain B05.10) (Noble rot fungus) protein is Small ribosomal subunit protein eS1 (rps1).